A 619-amino-acid chain; its full sequence is Sodium-coupled monocarboxylate transporter 2 (619 aa).

Over 1–9 (MRVKNFEAW) the chain is Extracellular. The chain crosses the membrane as a helical span at residues 10–30 (DYVVFAGLFVISSGIGVFFAI). Residues 31–47 (KERKKTTSREFLVGGRQ) lie on the Cytoplasmic side of the membrane. A helical membrane pass occupies residues 48 to 68 (MSFGPVALSLTASFMSAVTVL). The Extracellular portion of the chain corresponds to 69–80 (GTPAEVYRFGAS). The chain crosses the membrane as a helical span at residues 81 to 101 (FFLFLISYVFVVFFTSELFLP). Topologically, residues 102-128 (VFYRSGITSTYEYLQLRFNKPVRYAAT) are cytoplasmic. A helical transmembrane segment spans residues 129–149 (IIYIVQTILYTGVVVYAPALA). Residues 150–157 (LNQVTGFN) are Extracellular-facing. Residues 158-178 (LWASVFATGIVCTFYCSLGGL) traverse the membrane as a helical segment. Residues 179-180 (KA) are Cytoplasmic-facing. Residues 181–201 (VVWTDAFQMVVMIVGFLTVLI) form a helical membrane-spanning segment. Residues 202–235 (QGSNHVGGFNNVLEKAGNGSRLHIVDFDVDPLRR) lie on the Extracellular side of the membrane. Asparagine 219 is a glycosylation site (N-linked (GlcNAc...) asparagine). The helical transmembrane segment at 236–256 (HTFWTITIGGTFTWLGVYGVN) threads the bilayer. The Cytoplasmic portion of the chain corresponds to 257 to 275 (QSTIQRCISCKTEKHAKLA). The chain crosses the membrane as a helical span at residues 276 to 296 (LYFNLLGLWIIVACAVFSGLI). The Extracellular portion of the chain corresponds to 297–321 (MYSHFKDCDPWTSGVISAPDQLMPY). Residues 322–342 (FVMEIFATMPGLPGLFVACAF) form a helical membrane-spanning segment. The Cytoplasmic portion of the chain corresponds to 343–385 (SGTLSTVAASINALATVTFEDFVKSCFPHLSDKLSTWISKGLC). Residues 386 to 406 (ILFGIMCTSMAVVASLMGSVV) traverse the membrane as a helical segment. Residues 407 to 411 (QAALS) lie on the Extracellular side of the membrane. Residues 412-432 (IHGMCGGPMLGLFTLGLVFPF) traverse the membrane as a helical segment. The Cytoplasmic portion of the chain corresponds to 433–437 (VNWKG). The chain crosses the membrane as a helical span at residues 438-458 (ALGGLLTGITLSFWVAIGSFI). Topologically, residues 459–504 (YPAPESKTLPLPLSTEHCVELNITTTVAPQISSRPVLADTWYSLSY) are extracellular. The N-linked (GlcNAc...) asparagine glycan is linked to asparagine 480. A helical transmembrane segment spans residues 505–525 (LYFSAVGCLGCIAAGIIISFL). At 526–619 (TGKQRGKDID…NSVPEKTTYF (94 aa)) the chain is on the cytoplasmic side.

This sequence belongs to the sodium:solute symporter (SSF) (TC 2.A.21) family. Expressed in the cortical region of the kidney corresponding to the proximal tubule. Expressed in Mueller cells of the inner retina (at protein level). Isoform 1 is expressed in the retina, kidney, small intestine and skeletal muscle. Isoform 2 is not detected in the kidney, small intestine and skeletal muscle. In the kidney, expressed predominantly in tubular epithelial cells of the cortical region and in the convoluted portions of the proximal tubule (pars convoluta). In the small intestine, its expression is highest in the proximal part and gradually decreased towards the distal end. Expressed in the neural retina. Not detected in the caecum and colon.

The protein localises to the apical cell membrane. The catalysed reaction is (S)-lactate(out) + Na(+)(out) = (S)-lactate(in) + Na(+)(in). The enzyme catalyses nicotinate(out) + Na(+)(out) = nicotinate(in) + Na(+)(in). It carries out the reaction pyruvate(out) + Na(+)(out) = pyruvate(in) + Na(+)(in). It catalyses the reaction propanoate(out) + Na(+)(out) = propanoate(in) + Na(+)(in). The catalysed reaction is butanoate(out) + Na(+)(out) = butanoate(in) + Na(+)(in). The enzyme catalyses acetoacetate(out) + Na(+)(out) = acetoacetate(in) + Na(+)(in). Acts as an electroneutral and low-affinity sodium (Na(+))-dependent sodium-coupled solute transporter. Catalyzes the transport across the plasma membrane of many monocarboxylates such as lactate, pyruvate, nicotinate, propionate, butyrate and beta-D-hydroxybutyrate. May be responsible for the first step of reabsorption of monocarboxylates from the lumen of the proximal tubule of the kidney and the small intestine. May play also a role in monocarboxylates transport in the retina. Mediates electroneutral uptake of lactate, with a stoichiometry of 2 Na(+) for each lactate. The chain is Sodium-coupled monocarboxylate transporter 2 (Slc5a12) from Mus musculus (Mouse).